We begin with the raw amino-acid sequence, 421 residues long: NADH-quinone oxidoreductase subunit F (421 aa).

54 to 63 (GRGGAGFSTG) serves as a coordination point for NAD(+). Residue 166-213 (GAGAYICGEETALLESLEGKKGMPRLKPPFPAGFGLYGCPTTINNVES) participates in FMN binding. Residues Cys344, Cys347, Cys350, and Cys390 each contribute to the [4Fe-4S] cluster site.

This sequence belongs to the complex I 51 kDa subunit family. It depends on FMN as a cofactor. The cofactor is [4Fe-4S] cluster.

It carries out the reaction a quinone + NADH + 5 H(+)(in) = a quinol + NAD(+) + 4 H(+)(out). In terms of biological role, NDH-1 shuttles electrons from NADH, via FMN and iron-sulfur (Fe-S) centers, to quinones in the respiratory chain. Couples the redox reaction to proton translocation (for every two electrons transferred, four hydrogen ions are translocated across the cytoplasmic membrane), and thus conserves the redox energy in a proton gradient. This chain is NADH-quinone oxidoreductase subunit F (nuoF), found in Rickettsia typhi (strain ATCC VR-144 / Wilmington).